Reading from the N-terminus, the 351-residue chain is S-adenosylmethionine:tRNA ribosyltransferase-isomerase (351 aa).

It belongs to the QueA family. Monomer.

Its subcellular location is the cytoplasm. The catalysed reaction is 7-aminomethyl-7-carbaguanosine(34) in tRNA + S-adenosyl-L-methionine = epoxyqueuosine(34) in tRNA + adenine + L-methionine + 2 H(+). Its pathway is tRNA modification; tRNA-queuosine biosynthesis. In terms of biological role, transfers and isomerizes the ribose moiety from AdoMet to the 7-aminomethyl group of 7-deazaguanine (preQ1-tRNA) to give epoxyqueuosine (oQ-tRNA). In Hahella chejuensis (strain KCTC 2396), this protein is S-adenosylmethionine:tRNA ribosyltransferase-isomerase.